Reading from the N-terminus, the 148-residue chain is Lysozyme C (148 aa).

A signal peptide spans 1–18 (MKAVIILGLVLLSVTVQG). Residues 19 to 148 (KIFERCELAR…VSQYVQGCGV (130 aa)) enclose the C-type lysozyme domain. 4 cysteine pairs are disulfide-bonded: Cys24/Cys146, Cys48/Cys134, Cys83/Cys99, and Cys95/Cys113. Catalysis depends on residues Glu53 and Asp71.

It belongs to the glycosyl hydrolase 22 family. As to quaternary structure, monomer.

The enzyme catalyses Hydrolysis of (1-&gt;4)-beta-linkages between N-acetylmuramic acid and N-acetyl-D-glucosamine residues in a peptidoglycan and between N-acetyl-D-glucosamine residues in chitodextrins.. Functionally, lysozymes have primarily a bacteriolytic function; those in tissues and body fluids are associated with the monocyte-macrophage system and enhance the activity of immunoagents. This Erythrocebus patas (Red guenon) protein is Lysozyme C (LYZ).